The chain runs to 157 residues: UPF0262 protein RL0614 (157 aa).

Belongs to the UPF0262 family.

This chain is UPF0262 protein RL0614, found in Rhizobium johnstonii (strain DSM 114642 / LMG 32736 / 3841) (Rhizobium leguminosarum bv. viciae).